The following is an 855-amino-acid chain: DNA mismatch repair protein MutS (855 aa).

613-620 contacts ATP; that stretch reads GPNMGGKS. Positions 796–816 are disordered; it reads TTSLPHEMPSQQSGKPASPMQ.

This sequence belongs to the DNA mismatch repair MutS family.

Functionally, this protein is involved in the repair of mismatches in DNA. It is possible that it carries out the mismatch recognition step. This protein has a weak ATPase activity. The polypeptide is DNA mismatch repair protein MutS (Pseudomonas aeruginosa (strain LESB58)).